Reading from the N-terminus, the 101-residue chain is Urease subunit gamma (101 aa).

It belongs to the urease gamma subunit family. Heterotrimer of UreA (gamma), UreB (beta) and UreC (alpha) subunits. Three heterotrimers associate to form the active enzyme.

The protein localises to the cytoplasm. The enzyme catalyses urea + 2 H2O + H(+) = hydrogencarbonate + 2 NH4(+). It participates in nitrogen metabolism; urea degradation; CO(2) and NH(3) from urea (urease route): step 1/1. The protein is Urease subunit gamma of Ureaplasma urealyticum serovar 10 (strain ATCC 33699 / Western).